Here is a 185-residue protein sequence, read N- to C-terminus: Adenine phosphoribosyltransferase (185 aa).

The protein belongs to the purine/pyrimidine phosphoribosyltransferase family.

It is found in the cytoplasm. It carries out the reaction AMP + diphosphate = 5-phospho-alpha-D-ribose 1-diphosphate + adenine. It participates in purine metabolism; AMP biosynthesis via salvage pathway; AMP from adenine: step 1/1. Its function is as follows. Catalyzes a salvage reaction resulting in the formation of AMP, that is energically less costly than de novo synthesis. The sequence is that of Adenine phosphoribosyltransferase (aprt-1) from Caenorhabditis elegans.